Consider the following 208-residue polypeptide: Pyridoxine/pyridoxamine 5'-phosphate oxidase (208 aa).

FMN contacts are provided by residues 55–60 (RMVLLK), 70–71 (YT), K77, and Q99. A substrate-binding site is contributed by K60. Substrate is bound by residues Y117, R121, and S125. FMN is bound by residues 134-135 (QS) and W180. Residue 186 to 188 (RIH) participates in substrate binding. R190 lines the FMN pocket.

Belongs to the pyridoxamine 5'-phosphate oxidase family. In terms of assembly, homodimer. Requires FMN as cofactor.

The catalysed reaction is pyridoxamine 5'-phosphate + O2 + H2O = pyridoxal 5'-phosphate + H2O2 + NH4(+). It carries out the reaction pyridoxine 5'-phosphate + O2 = pyridoxal 5'-phosphate + H2O2. It functions in the pathway cofactor metabolism; pyridoxal 5'-phosphate salvage; pyridoxal 5'-phosphate from pyridoxamine 5'-phosphate: step 1/1. It participates in cofactor metabolism; pyridoxal 5'-phosphate salvage; pyridoxal 5'-phosphate from pyridoxine 5'-phosphate: step 1/1. Catalyzes the oxidation of either pyridoxine 5'-phosphate (PNP) or pyridoxamine 5'-phosphate (PMP) into pyridoxal 5'-phosphate (PLP). This Pelagibacter ubique (strain HTCC1062) protein is Pyridoxine/pyridoxamine 5'-phosphate oxidase.